Here is a 255-residue protein sequence, read N- to C-terminus: 14-3-3-like protein B (255 aa).

This sequence belongs to the 14-3-3 family.

The protein is 14-3-3-like protein B of Nicotiana tabacum (Common tobacco).